Here is a 121-residue protein sequence, read N- to C-terminus: Large ribosomal subunit protein bL12 (121 aa).

Belongs to the bacterial ribosomal protein bL12 family. As to quaternary structure, homodimer. Part of the ribosomal stalk of the 50S ribosomal subunit. Forms a multimeric L10(L12)X complex, where L10 forms an elongated spine to which 2 to 4 L12 dimers bind in a sequential fashion. Binds GTP-bound translation factors.

Its function is as follows. Forms part of the ribosomal stalk which helps the ribosome interact with GTP-bound translation factors. Is thus essential for accurate translation. The protein is Large ribosomal subunit protein bL12 of Pectobacterium atrosepticum (strain SCRI 1043 / ATCC BAA-672) (Erwinia carotovora subsp. atroseptica).